We begin with the raw amino-acid sequence, 407 residues long: Phosphopentomutase (407 aa).

Residues Asp-10, Asp-306, His-311, Asp-347, His-348, and His-359 each contribute to the Mn(2+) site.

The protein belongs to the phosphopentomutase family. Requires Mn(2+) as cofactor.

It localises to the cytoplasm. The catalysed reaction is 2-deoxy-alpha-D-ribose 1-phosphate = 2-deoxy-D-ribose 5-phosphate. The enzyme catalyses alpha-D-ribose 1-phosphate = D-ribose 5-phosphate. It participates in carbohydrate degradation; 2-deoxy-D-ribose 1-phosphate degradation; D-glyceraldehyde 3-phosphate and acetaldehyde from 2-deoxy-alpha-D-ribose 1-phosphate: step 1/2. Its function is as follows. Isomerase that catalyzes the conversion of deoxy-ribose 1-phosphate (dRib-1-P) and ribose 1-phosphate (Rib-1-P) to deoxy-ribose 5-phosphate (dRib-5-P) and ribose 5-phosphate (Rib-5-P), respectively. This Shigella dysenteriae serotype 1 (strain Sd197) protein is Phosphopentomutase.